A 397-amino-acid chain; its full sequence is RNA binding protein fox-1 homolog 1 (397 aa).

Positions Met-1–Val-121 are disordered. The span at Gln-70 to Gly-87 shows a compositional bias: polar residues. Positions Thr-88–Asp-99 are enriched in low complexity. Positions Gly-100–Lys-113 are enriched in polar residues. One can recognise an RRM domain in the interval Lys-117–Ala-193. Asymmetric dimethylarginine is present on Arg-317. Arg-388 carries the post-translational modification Omega-N-methylarginine.

Binds to the C-terminus of ATXN2. As to expression, predominantly expressed in muscle and brain.

It is found in the nucleus. The protein localises to the cytoplasm. RNA-binding protein that regulates alternative splicing events by binding to 5'-UGCAUGU-3' elements. Regulates alternative splicing of tissue-specific exons and of differentially spliced exons during erythropoiesis. This chain is RNA binding protein fox-1 homolog 1 (RBFOX1), found in Homo sapiens (Human).